A 452-amino-acid chain; its full sequence is Phosphoglucosamine mutase (452 aa).

Serine 103 acts as the Phosphoserine intermediate in catalysis. Residues serine 103, aspartate 244, aspartate 246, and aspartate 248 each contribute to the Mg(2+) site. Serine 103 is subject to Phosphoserine.

The protein belongs to the phosphohexose mutase family. Mg(2+) is required as a cofactor. In terms of processing, activated by phosphorylation.

The catalysed reaction is alpha-D-glucosamine 1-phosphate = D-glucosamine 6-phosphate. In terms of biological role, catalyzes the conversion of glucosamine-6-phosphate to glucosamine-1-phosphate. In Rhodospirillum rubrum (strain ATCC 11170 / ATH 1.1.1 / DSM 467 / LMG 4362 / NCIMB 8255 / S1), this protein is Phosphoglucosamine mutase.